The sequence spans 223 residues: Probable transaldolase (223 aa).

The active-site Schiff-base intermediate with substrate is the K92.

The protein belongs to the transaldolase family. Type 3B subfamily.

The protein localises to the cytoplasm. The catalysed reaction is D-sedoheptulose 7-phosphate + D-glyceraldehyde 3-phosphate = D-erythrose 4-phosphate + beta-D-fructose 6-phosphate. It participates in carbohydrate degradation; pentose phosphate pathway; D-glyceraldehyde 3-phosphate and beta-D-fructose 6-phosphate from D-ribose 5-phosphate and D-xylulose 5-phosphate (non-oxidative stage): step 2/3. Transaldolase is important for the balance of metabolites in the pentose-phosphate pathway. The protein is Probable transaldolase of Thermus thermophilus (strain ATCC BAA-163 / DSM 7039 / HB27).